Here is a 1001-residue protein sequence, read N- to C-terminus: Non-canonical poly(A) RNA polymerase protein Trf4-1 (1001 aa).

Composition is skewed to low complexity over residues Thr-44–Ser-86 and Arg-127–Gly-163. Disordered regions lie at residues Thr-44–Ser-92 and Gln-115–Ala-238. Residues Pro-164–Gly-178 are compositionally biased toward gly residues. The span at Thr-179 to Ser-216 shows a compositional bias: low complexity. Residues Asp-328 and Asp-330 each coordinate Mn(2+). The PAP-associated domain occupies Asn-458–Gly-517. Disordered stretches follow at residues Pro-631–His-652, Gln-687–Val-740, Ala-767–Thr-963, and Ser-977–Arg-1001. Positions Gly-635–Pro-649 are enriched in basic residues. Low complexity-rich tracts occupy residues Gln-687–Gln-708 and Ser-768–Ser-788. Residues Val-827–Gly-841 show a composition bias toward gly residues. Positions Tyr-844 to Gly-854 are enriched in polar residues. Positions Tyr-855–His-880 are enriched in low complexity. Basic residues predominate over residues Gln-881 to His-912. 2 stretches are compositionally biased toward low complexity: residues Ser-932–Ser-955 and Ser-977–Ser-992.

Belongs to the DNA polymerase type-B-like family. It depends on Mn(2+) as a cofactor.

The protein resides in the cytoplasm. The enzyme catalyses RNA(n) + ATP = RNA(n)-3'-adenine ribonucleotide + diphosphate. Its function is as follows. Involved in a post-transcriptional quality control mechanism limiting inappropriate expression of genetic information. Polyadenylation is required for the degradative activity of the exosome on several of its nuclear RNA substrates. Polyadenylates RNA processing and degradation intermediates of snRNAs and mRNAs. This is Non-canonical poly(A) RNA polymerase protein Trf4-1 from Drosophila melanogaster (Fruit fly).